Consider the following 275-residue polypeptide: Diaminopimelate epimerase (275 aa).

Residues N13, Q46, and N65 each contribute to the substrate site. Catalysis depends on C74, which acts as the Proton donor. Residues 75 to 76, N158, N191, and 209 to 210 each bind substrate; these read GN and ER. C218 (proton acceptor) is an active-site residue. Residue 219–220 participates in substrate binding; that stretch reads GT.

Belongs to the diaminopimelate epimerase family. Homodimer.

It is found in the cytoplasm. It carries out the reaction (2S,6S)-2,6-diaminopimelate = meso-2,6-diaminopimelate. It participates in amino-acid biosynthesis; L-lysine biosynthesis via DAP pathway; DL-2,6-diaminopimelate from LL-2,6-diaminopimelate: step 1/1. Its function is as follows. Catalyzes the stereoinversion of LL-2,6-diaminopimelate (L,L-DAP) to meso-diaminopimelate (meso-DAP), a precursor of L-lysine and an essential component of the bacterial peptidoglycan. The chain is Diaminopimelate epimerase from Nitrosomonas europaea (strain ATCC 19718 / CIP 103999 / KCTC 2705 / NBRC 14298).